A 505-amino-acid polypeptide reads, in one-letter code: Probable Xaa-Pro aminopeptidase Pc16g13390 (505 aa).

The Mn(2+) site is built by aspartate 287, aspartate 298, glutamate 436, and glutamate 475.

Belongs to the peptidase M24B family. It depends on Mn(2+) as a cofactor.

The catalysed reaction is Release of any N-terminal amino acid, including proline, that is linked to proline, even from a dipeptide or tripeptide.. In terms of biological role, catalyzes the removal of a penultimate prolyl residue from the N-termini of peptides. The polypeptide is Probable Xaa-Pro aminopeptidase Pc16g13390 (Penicillium rubens (strain ATCC 28089 / DSM 1075 / NRRL 1951 / Wisconsin 54-1255) (Penicillium chrysogenum)).